Here is an 868-residue protein sequence, read N- to C-terminus: E3 ubiquitin-protein ligase TRIM71 (868 aa).

The residue at position 2 (alanine 2) is an N-acetylalanine. The RING-type zinc finger occupies 12–89; it reads CLLCKEMCGS…PLKLRCPVCD (78 aa). The span at 26-41 shows a compositional bias: low complexity; that stretch reads SSNSSASSSSSQTSTS. Disordered stretches follow at residues 26–50 and 121–186; these read SSNSSASSSSSQTSTSSGGGGGGPG and ADEP…GSPS. Residues 142-153 are compositionally biased toward basic residues; that stretch reads SNHRHHAHHAHP. The span at 159-176 shows a compositional bias: pro residues; the sequence is APPPPLPPAPPPPAPPRS. The span at 177-186 shows a compositional bias: low complexity; the sequence is APGGPAGSPS. A B box-type 1; atypical zinc finger spans residues 191–238; the sequence is RRPHGCSSCDEGNAASSRCLDCQEHLCDNCVRAHQRVRLTKDHYIERG. The B box-type 2 zinc finger occupies 273–314; the sequence is ERLGFCQHHDDEVLHLYCDTCSVPICRECTVGRHGGHSFVYL. The Zn(2+) site is built by cysteine 278, histidine 281, cysteine 301, and histidine 306. A coiled-coil region spans residues 391–427; sequence QVKAKSLYLQVEKLRQNLNKLESTISAVQQVLEEGRA. A Filamin repeat occupies 479–580; it reads SSGAFAPLTK…IENSPFKVVV (102 aa). 6 NHL repeats span residues 593-636, 640-683, 687-730, 734-777, 781-824, and 828-868; these read GLSF…FKPC, HHKF…FTFE, LLKF…FGPD, LNKY…IHPD, ARFL…FESN, and LCKF…ILIF.

This sequence belongs to the TRIM/RBCC family. Interacts (via NHL repeats) with AGO2; the interaction increases in presence of RNA. Interacts with HSP90AA1. Interacts (via NHL repeats) with MOV10, PABPC1, PUM1, PUM2, STAU2, XRN1 and XRN2 in an RNA-dependent manner. Interacts with SHCBP1; leading to enhance its stability. In terms of processing, autoubiquitinated.

It localises to the cytoplasm. The protein localises to the P-body. It carries out the reaction S-ubiquitinyl-[E2 ubiquitin-conjugating enzyme]-L-cysteine + [acceptor protein]-L-lysine = [E2 ubiquitin-conjugating enzyme]-L-cysteine + N(6)-ubiquitinyl-[acceptor protein]-L-lysine.. It participates in protein modification; protein ubiquitination. Functionally, E3 ubiquitin-protein ligase that cooperates with the microRNAs (miRNAs) machinery and promotes embryonic stem cells proliferation and maintenance. Binds to miRNAs and associates with AGO2, participating in post-transcriptional repression of transcripts such as CDKN1A. In addition, participates in post-transcriptional mRNA repression in a miRNA independent mechanism. Facilitates the G1-S transition to promote rapid embryonic stem cell self-renewal by repressing CDKN1A expression. Required to maintain proliferation and prevent premature differentiation of neural progenitor cells during early neural development: positively regulates FGF signaling by controlling the stability of SHCBP1. Specific regulator of miRNA biogenesis. Binds to miRNA MIR29A hairpin and postranscriptionally modulates MIR29A levels, which indirectly regulates TET proteins expression. In Bos taurus (Bovine), this protein is E3 ubiquitin-protein ligase TRIM71 (TRIM71).